The chain runs to 739 residues: Phosphoribosylformylglycinamidine synthase subunit PurL (739 aa).

H53 is a catalytic residue. ATP-binding residues include Y56 and K95. Residue E97 coordinates Mg(2+). Residues 98–101 (SHNH) and R120 each bind substrate. Residue H99 is the Proton acceptor of the active site. D121 contacts Mg(2+). Q244 is a binding site for substrate. Position 274 (D274) interacts with Mg(2+). 318-320 (ESQ) is a binding site for substrate. D501 and G538 together coordinate ATP. N539 provides a ligand contact to Mg(2+). S541 is a binding site for substrate.

This sequence belongs to the FGAMS family. As to quaternary structure, monomer. Part of the FGAM synthase complex composed of 1 PurL, 1 PurQ and 2 PurS subunits.

It is found in the cytoplasm. The catalysed reaction is N(2)-formyl-N(1)-(5-phospho-beta-D-ribosyl)glycinamide + L-glutamine + ATP + H2O = 2-formamido-N(1)-(5-O-phospho-beta-D-ribosyl)acetamidine + L-glutamate + ADP + phosphate + H(+). Its pathway is purine metabolism; IMP biosynthesis via de novo pathway; 5-amino-1-(5-phospho-D-ribosyl)imidazole from N(2)-formyl-N(1)-(5-phospho-D-ribosyl)glycinamide: step 1/2. In terms of biological role, part of the phosphoribosylformylglycinamidine synthase complex involved in the purines biosynthetic pathway. Catalyzes the ATP-dependent conversion of formylglycinamide ribonucleotide (FGAR) and glutamine to yield formylglycinamidine ribonucleotide (FGAM) and glutamate. The FGAM synthase complex is composed of three subunits. PurQ produces an ammonia molecule by converting glutamine to glutamate. PurL transfers the ammonia molecule to FGAR to form FGAM in an ATP-dependent manner. PurS interacts with PurQ and PurL and is thought to assist in the transfer of the ammonia molecule from PurQ to PurL. The polypeptide is Phosphoribosylformylglycinamidine synthase subunit PurL (Listeria monocytogenes serotype 4b (strain F2365)).